The following is a 483-amino-acid chain: MLTLDTLNVMLAVSEEGLIEEMIIALLASPQLAVFFEKFPRLKAAITDDVPRWREALRSRLKDARVPPELTEEVMCYQQSQLLSTPQFIVQLPQILDLLHRLNSPWAEQARQLVDANSTITSALHTLFLQRWRLSLIVQATTLNQQLLEEEREQLLSEVQERMTLSGQLEPILADNNTAAGRLWDMSAGQLKRGDYQFIVKYGEFLNEQPELKRLAEQLGRSREAKSIPRNDAQMETFRTMVREPATVPEQVDGLQQSDDILRLLPPELAKLGITELEYEFYRRLVEKQLLTYRLHGESWREKVFERPVVHKDYDEQPRGPFIVCVDTSGSMGGFNEQCAKAFCLALMRIALAENRRCYIMLFSTEIVRYELSGPQGIEQAIRFLSQQFRGGTDLASCFRAIMERLQSREWFDADAVVISDFIAQRLPDDVTSKVKELQRVHQHRFHAVAMSAHGKPGIMRIFDHIWRFDTGMRSRLLRRWRR.

This sequence belongs to the ViaA family. Homodimer. Interacts with RavA.

It is found in the cytoplasm. Its function is as follows. Component of the RavA-ViaA chaperone complex, which may act on the membrane to optimize the function of some of the respiratory chains. ViaA stimulates the ATPase activity of RavA. The chain is Regulatory protein ViaA from Shigella flexneri.